The primary structure comprises 528 residues: Glucose transporter 1E (528 aa).

The segment at 1-22 (MTERRDNVSHAPDAIEGPNDGA) is disordered. The Cytoplasmic segment spans residues 1-43 (MTERRDNVSHAPDAIEGPNDGAHAEETSPGFFSFENLGVAQVQ). A helical transmembrane segment spans residues 44–64 (VVGGTLNGYVIGYVAVYLLLY). The Extracellular segment spans residues 65 to 118 (LTATECKFTTEGACGGRKIYGCKWSGTTCKFENPKCSEGSDPSDSCKNEVAYTS). A helical transmembrane segment spans residues 119–139 (VYSGIFACAMIVGSMVGSIIA). Topologically, residues 140-151 (GKCITTFGLKKS) are cytoplasmic. The helical transmembrane segment at 152–172 (FIIVSITCTIACVVVQVAIEY) threads the bilayer. The Extracellular portion of the chain corresponds to 173–175 (NNY). The chain crosses the membrane as a helical span at residues 176 to 196 (YALCTGRVLIGLGVGILCSVF). At 197-213 (PMYVNENAHPKLCKMDG) the chain is on the cytoplasmic side. Residues 214–234 (VLFQVFTTLGIMLAAMLGLIL) traverse the membrane as a helical segment. At 235–250 (DKTGASKEEANMAGRL) the chain is on the extracellular side. The helical transmembrane segment at 251 to 271 (HVFSAVPLGLSVAMFLVGMFL) threads the bilayer. Over 272 to 301 (RESTATFAQDDDGKADGGMDPNEYGWGQML) the chain is Cytoplasmic. The helical transmembrane segment at 302 to 322 (WPLFMGAVTAGTLQLTGINAV) threads the bilayer. Topologically, residues 323-338 (MNYAPKITENLGMDPS) are extracellular. The chain crosses the membrane as a helical span at residues 339–359 (LGNFLVMAWNFVTSLVAIPLA). Residues 360-367 (SRFTMRQM) lie on the Cytoplasmic side of the membrane. Residues 368 to 388 (FITCSFVASCMCLFLCGIPVF) form a helical membrane-spanning segment. Over 389-403 (PGVAEEKVKNGVATT) the chain is Extracellular. The chain crosses the membrane as a helical span at residues 404–424 (GIALFIAAFEFGVGSCFFVLA). At 425–438 (QDLFPPSFRPKGSS) the chain is on the cytoplasmic side. Residues 439 to 459 (FVVMMQFIFNILINLLYPITT) traverse the membrane as a helical segment. Residues 460-475 (EAISGGATGDQDKGQA) lie on the Extracellular side of the membrane. Residues 476 to 496 (VVFILFGLIGLICFVLQFFYL) traverse the membrane as a helical segment. Residues 497 to 528 (YPYDANQDHENDHGTEPVERILSPVDVPTPRN) are Cytoplasmic-facing. Residues 507–528 (NDHGTEPVERILSPVDVPTPRN) are disordered.

Belongs to the major facilitator superfamily. Sugar transporter (TC 2.A.1.1) family.

It localises to the membrane. Its function is as follows. Facilitative glucose transporter. The protein is Glucose transporter 1E (THT1E) of Trypanosoma brucei brucei.